A 1036-amino-acid chain; its full sequence is KAT8 regulatory NSL complex subunit 1 (1036 aa).

An N6-acetyllysine modification is found at K104. Disordered stretches follow at residues 145-211 (GQTA…CTLP) and 226-257 (NSTA…SSSN). Over residues 226–244 (NSTANKSSVNSMDQPALQG) the composition is skewed to polar residues. Low complexity predominate over residues 245–256 (SSRLSPSTDSSS). S249 carries the phosphoserine modification. K262 participates in a covalent cross-link: Glycyl lysine isopeptide (Lys-Gly) (interchain with G-Cter in SUMO2). A Phosphoserine modification is found at S268. The stretch at 285–312 (TALLRRQADIEIRARRLQKRLQVVQAKQ) forms a coiled coil. A Glycyl lysine isopeptide (Lys-Gly) (interchain with G-Cter in SUMO2) cross-link involves residue K331. Disordered regions lie at residues 399–423 (DSDV…RADP) and 739–787 (SPSY…RRRG). Residues 759-772 (STSSDTSTPTSSGS) are compositionally biased toward low complexity. The interval 781 to 813 (PVRRRRGESSFDINNIVIPMSVAATTRVEKLQY) is required for activation of KAT8 histone acetyltransferase activity. Residues 815 to 966 (EILTPSWREV…GLDEQSVQPW (152 aa)) enclose the PEHE domain. The segment at 841-859 (EDLSDAAFAALHAKCEEME) is interaction with KAT8 HAT domain. Residues 869–931 (VPPQRRGSRS…SPISPELHSA (63 aa)) are disordered. Over residues 886–896 (TTPQLGSANPS) the composition is skewed to polar residues. Over residues 906–919 (SSSHSLSEFSHGQS) the composition is skewed to low complexity. Phosphoserine is present on residues S922 and S925. Phosphothreonine is present on T934. The residue at position 976 (S976) is a Phosphoserine. A disordered region spans residues 989-1020 (DTAARCTRRTSGSKTGREAEVAPTSPPVVPLK).

In terms of assembly, component of the NSL complex at least composed of MOF/KAT8, KANSL1, KANSL2, KANSL3, MCRS1, PHF20, OGT1/OGT, WDR5 and HCFC1. Interacts (via PEHE domain) with KAT8 (via HAT domain); the interaction is direct. Component of some MLL1/MLL complex, at least composed of the core components KMT2A/MLL1, ASH2L, HCFC1, WDR5 and RBBP5, as well as the facultative components BACC1, CHD8, E2F6, HSP70, INO80C, KANSL1, LAS1L, MAX, MCRS1, MGA, KAT8/MOF, PELP1, PHF20, PRP31, RING2, RUVB1/TIP49A, RUVB2/TIP49B, SENP3, TAF1, TAF4, TAF6, TAF7, TAF9 and TEX10.

It localises to the nucleus. It is found in the chromosome. Its subcellular location is the centromere. The protein localises to the kinetochore. The protein resides in the mitochondrion. It localises to the cytoplasm. It is found in the cytoskeleton. Its subcellular location is the spindle pole. In terms of biological role, non-catalytic component of the NSL histone acetyltransferase complex, a multiprotein complex that mediates histone H4 acetylation at 'Lys-5'- and 'Lys-8' (H4K5ac and H4K8ac) at transcription start sites and promotes transcription initiation. The NSL complex also acts as a regulator of gene expression in mitochondria. In addition to its role in transcription, KANSL1 also plays an essential role in spindle assembly during mitosis. Associates with microtubule ends and contributes to microtubule stability. The chain is KAT8 regulatory NSL complex subunit 1 (Kansl1) from Mus musculus (Mouse).